The sequence spans 280 residues: Trypsin zeta (280 aa).

Positions 1–22 (MSSSWIVGLLAFLVSLVALTQG) are cleaved as a signal peptide. A propeptide spans 23 to 38 (LPLLEDLDEKSVPDGR) (activation peptide). Residues 39-278 (IVGGYATDIA…LRPWIDAVLA (240 aa)) enclose the Peptidase S1 domain. Cysteines 72 and 88 form a disulfide. Catalysis depends on charge relay system residues H87 and D134. 2 disulfide bridges follow: C198–C218 and C230–C254. The Charge relay system role is filled by S234.

It belongs to the peptidase S1 family.

It is found in the secreted. Its subcellular location is the extracellular space. It catalyses the reaction Preferential cleavage: Arg-|-Xaa, Lys-|-Xaa.. The chain is Trypsin zeta (zetaTry) from Drosophila melanogaster (Fruit fly).